We begin with the raw amino-acid sequence, 390 residues long: Transforming growth factor beta-1 proprotein (390 aa).

Residues 1–29 (MPPSGLRLLPLLLPLLWLLVLTPGRPAAG) form the signal peptide. A straightjacket domain region spans residues 30 to 74 (LSTCKTIDMELVKRKRIEAIRGQILSKLRLASPPSQGDVPPGPLP). The arm domain stretch occupies residues 75–271 (EAVLALYNST…ATPLERAQHL (197 aa)). N-linked (GlcNAc...) asparagine glycosylation is found at N82, N136, and N176. Positions 226–252 (DSKDNTLHVEINGFNSGRRGDLATIHG) are bowtie tail. A Cell attachment site motif is present at residues 244–246 (RGD). 4 disulfide bridges follow: C285–C294, C293–C356, C322–C387, and C326–C389.

This sequence belongs to the TGF-beta family. Homodimer; disulfide-linked. Interacts with the serine proteases, HTRA1 and HTRA3: the interaction with either inhibits TGFB1-mediated signaling and the HTRA protease activity is required for this inhibition. May interact with THSD4; this interaction may lead to sequestration by FBN1 microfibril assembly and attenuation of TGFB signaling. Interacts with CD109, DPT and ASPN. Interacts with EFEMP2. Interacts with TSKU; the interaction contributes to regulation of the hair cycle. Interacts with TGFBR3. In terms of assembly, homodimer; disulfide-linked. Interacts with transforming growth factor beta-1 (TGF-beta-1) chain; interaction is non-covalent and maintains TGF-beta-1 in a latent state; each latency-associated peptide (LAP) monomer interacts with TGF-beta-1 in the other monomer. Interacts with LTBP1; leading to regulation of TGF-beta-1 activation. Interacts with LRRC32/GARP; leading to regulation of TGF-beta-1 activation on the surface of activated regulatory T-cells (Tregs). Interacts with LRRC33/NRROS; leading to regulation of TGF-beta-1 activation in macrophages and microglia. Interacts (via cell attachment site) with integrins ITGAV and ITGB6 (ITGAV:ITGB6), leading to release of the active TGF-beta-1. Interacts with NREP; the interaction results in a decrease in TGFB1 autoinduction. Interacts with HSP90AB1; inhibits latent TGFB1 activation. As to quaternary structure, homodimer; disulfide-linked. Interacts with TGF-beta receptors (TGFBR1 and TGFBR2), leading to signal transduction. Post-translationally, transforming growth factor beta-1 proprotein: The precursor proprotein is cleaved in the Golgi apparatus by FURIN to form Transforming growth factor beta-1 (TGF-beta-1) and Latency-associated peptide (LAP) chains, which remain non-covalently linked, rendering TGF-beta-1 inactive. N-glycosylated. Deglycosylation leads to activation of Transforming growth factor beta-1 (TGF-beta-1); mechanisms triggering deglycosylation-driven activation of TGF-beta-1 are however unclear.

Its subcellular location is the secreted. The protein resides in the extracellular space. The protein localises to the extracellular matrix. Functionally, transforming growth factor beta-1 proprotein: Precursor of the Latency-associated peptide (LAP) and Transforming growth factor beta-1 (TGF-beta-1) chains, which constitute the regulatory and active subunit of TGF-beta-1, respectively. Its function is as follows. Required to maintain the Transforming growth factor beta-1 (TGF-beta-1) chain in a latent state during storage in extracellular matrix. Associates non-covalently with TGF-beta-1 and regulates its activation via interaction with 'milieu molecules', such as LTBP1, LRRC32/GARP and LRRC33/NRROS, that control activation of TGF-beta-1. Interaction with LRRC33/NRROS regulates activation of TGF-beta-1 in macrophages and microglia. Interaction with LRRC32/GARP controls activation of TGF-beta-1 on the surface of activated regulatory T-cells (Tregs). Interaction with integrins (ITGAV:ITGB6 or ITGAV:ITGB8) results in distortion of the Latency-associated peptide chain and subsequent release of the active TGF-beta-1. Multifunctional protein that regulates the growth and differentiation of various cell types and is involved in various processes, such as normal development, immune function, microglia function and responses to neurodegeneration. Activation into mature form follows different steps: following cleavage of the proprotein in the Golgi apparatus, Latency-associated peptide (LAP) and Transforming growth factor beta-1 (TGF-beta-1) chains remain non-covalently linked rendering TGF-beta-1 inactive during storage in extracellular matrix. At the same time, LAP chain interacts with 'milieu molecules', such as LTBP1, LRRC32/GARP and LRRC33/NRROS that control activation of TGF-beta-1 and maintain it in a latent state during storage in extracellular milieus. TGF-beta-1 is released from LAP by integrins (ITGAV:ITGB6 or ITGAV:ITGB8): integrin-binding to LAP stabilizes an alternative conformation of the LAP bowtie tail and results in distortion of the LAP chain and subsequent release of the active TGF-beta-1. Once activated following release of LAP, TGF-beta-1 acts by binding to TGF-beta receptors (TGFBR1 and TGFBR2), which transduce signal. While expressed by many cells types, TGF-beta-1 only has a very localized range of action within cell environment thanks to fine regulation of its activation by Latency-associated peptide chain (LAP) and 'milieu molecules'. Plays an important role in bone remodeling: acts as a potent stimulator of osteoblastic bone formation, causing chemotaxis, proliferation and differentiation in committed osteoblasts. Can promote either T-helper 17 cells (Th17) or regulatory T-cells (Treg) lineage differentiation in a concentration-dependent manner. At high concentrations, leads to FOXP3-mediated suppression of RORC and down-regulation of IL-17 expression, favoring Treg cell development. At low concentrations in concert with IL-6 and IL-21, leads to expression of the IL-17 and IL-23 receptors, favoring differentiation to Th17 cells. Stimulates sustained production of collagen through the activation of CREB3L1 by regulated intramembrane proteolysis (RIP). Mediates SMAD2/3 activation by inducing its phosphorylation and subsequent translocation to the nucleus. Positively regulates odontoblastic differentiation in dental papilla cells, via promotion of IPO7-mediated translocation of phosphorylated SMAD2 to the nucleus and subsequent transcription of target genes. Can induce epithelial-to-mesenchymal transition (EMT) and cell migration in various cell types. The polypeptide is Transforming growth factor beta-1 proprotein (TGFB1) (Sus scrofa (Pig)).